The primary structure comprises 99 residues: Seminal vesicle secretory protein 6 (99 aa).

The N-terminal stretch at 1 to 21 is a signal peptide; sequence MSPTSFFLLTMLLVLVTETAA.

The protein belongs to the SVP2/SVP5/SVP6 family. In terms of tissue distribution, testis.

The protein resides in the secreted. The protein localises to the extracellular space. The sequence is that of Seminal vesicle secretory protein 6 (Svs6) from Mus musculus (Mouse).